A 319-amino-acid chain; its full sequence is Putative olfactory receptor 52L2 (319 aa).

At 1 to 43 (MNLDSFFSFLLKSLIMALSNSSWRLPQPSFFLVGIPGLEESQH) the chain is on the extracellular side. N20 is a glycosylation site (N-linked (GlcNAc...) asparagine). A helical membrane pass occupies residues 44–64 (WIALPLGILYLLALVGNVTIL). Residues 65-72 (FIIWMDPS) are Cytoplasmic-facing. Residues 73–93 (LHQSMYLFLSMLAAIDLVVAS) form a helical membrane-spanning segment. Over 94 to 117 (STAPKALAVLLVRAQEIGYTVCLI) the chain is Extracellular. C115 and C207 are disulfide-bonded. A helical transmembrane segment spans residues 118–138 (QMFFTHAFSSMESGVLVAMAL). Residues 139–157 (DRYVAICHPLHHSTILHPG) are Cytoplasmic-facing. A helical transmembrane segment spans residues 158-178 (VIGHIGMVVLVRGLLLLIPFL). Over 179–214 (ILLRKLIFCQATIIGHAYCEHMAVVKLACSETTVNR) the chain is Extracellular. A helical transmembrane segment spans residues 215-235 (AYGLTVALLVVGLDVLAIGVS). The Cytoplasmic segment spans residues 236-255 (YAHILQAVLKVPGNEARLKA). A helical membrane pass occupies residues 256–276 (FSTCGSHVCVILVFYIPGMFS). The Extracellular segment spans residues 277 to 291 (FLTHRFGHHVPHHVH). Residues 292–312 (VLLAILYRLVPPALNPLVYRV) traverse the membrane as a helical segment. Residues 313-319 (KTQKIHQ) lie on the Cytoplasmic side of the membrane.

This sequence belongs to the G-protein coupled receptor 1 family.

It localises to the cell membrane. Its function is as follows. Odorant receptor. The protein is Putative olfactory receptor 52L2 (OR52L2P) of Homo sapiens (Human).